The following is a 202-amino-acid chain: uncharacterized protein (202 aa).

Positions D164–E202 are disordered. Residues T165–E202 are compositionally biased toward acidic residues.

This is an uncharacterized protein from Acanthamoeba polyphaga mimivirus (APMV).